Reading from the N-terminus, the 298-residue chain is MKAENVKLGIAPIGWTNDDLPEIGKENTFEQCVSEMALAGFTGSEVGSKYPRDIDVLKRKLDLRGIQICNAWFSTFFVDGKKEETIKGFIEHRDFLHAMGAKVIGCSEQSRSIQGQKKAIFKEKTIFTEAEWQLLAEGYNELAKLAAEKGMKVCLHHHMGTGIQTPAEIDKYMEITNDDVYLLFDSGHLYYSEGSQQVMLEVLEKYIHRVVHVHLKDVRDEVVAEVKANDLSFLEGVVKGTFTVPGDGVIDFKPIFDILEKYDYKGWMVVEAEQDPAIANPLEYAIKGRQYIREVAGV.

Belongs to the IolE/MocC family. Glutathione serves as cofactor. It depends on Co(2+) as a cofactor. The cofactor is Mn(2+).

It carries out the reaction scyllo-inosose = 3D-3,5/4-trihydroxycyclohexane-1,2-dione + H2O. Functionally, catalyzes the dehydration of inosose (2-keto-myo-inositol, 2KMI or 2,4,6/3,5-pentahydroxycyclohexanone) to 3D-(3,5/4)-trihydroxycyclohexane-1,2-dione (D-2,3-diketo-4-deoxy-epi-inositol). This chain is Inosose dehydratase, found in Histophilus somni (strain 129Pt) (Haemophilus somnus).